Here is a 420-residue protein sequence, read N- to C-terminus: GDP-mannose transporter 2 (420 aa).

Residues 1-11 (MASYTPSSSRP) are compositionally biased toward polar residues. Residues 1 to 21 (MASYTPSSSRPHTPLGLSPRG) form a disordered region. The Cytoplasmic segment spans residues 1-76 (MASYTPSSSR…KAKKEEVCMP (76 aa)). Residues 77–97 (ASTTVLPILSYCVASIMMTVV) traverse the membrane as a helical segment. Residues 98 to 106 (NKFVVSGRQ) are Lumenal-facing. The chain crosses the membrane as a helical span at residues 107-127 (FTMTFLLLAIQSFVCVACVWL). At 128–145 (AKRIGVINFRDWDMNDAK) the chain is on the cytoplasmic side. The chain crosses the membrane as a helical span at residues 146–168 (AWFPVSSLLVAVIYTGSKSLQFL). The Lumenal portion of the chain corresponds to 169 to 171 (SIP). Residues 172 to 194 (VYTIFKNLTIILIAYGEVIWFGG) traverse the membrane as a helical segment. Residues 195–200 (HVTPLT) lie on the Cytoplasmic side of the membrane. Residues 201–223 (LCSFFLMVGSSVIAAWADISTTL) traverse the membrane as a helical segment. The Lumenal portion of the chain corresponds to 224–251 (SKLSAGVAVVDPISGADVPLSSISVMDT). Residues 252–272 (MNVGYLWMFINCLASAGYVLF) traverse the membrane as a helical segment. Over 273–293 (MRKRIKVTGFKDWDSMFYNNL) the chain is Cytoplasmic. The helical transmembrane segment at 294-314 (LSIPVLFVFSLIIEDWGAASF) threads the bilayer. The Lumenal portion of the chain corresponds to 315-323 (SRNFPEEGR). A helical membrane pass occupies residues 324 to 344 (AFLLSAIAFSGAAAVFISYST). At 345–355 (AWCVRICGATT) the chain is on the cytoplasmic side. A helical membrane pass occupies residues 356–376 (YSLVGALNKLPVAASGILFFG). Topologically, residues 377–378 (DP) are lumenal. The helical transmembrane segment at 379–399 (VNFGNVSAILVGGVSGIVYAV) threads the bilayer. Residues 400-420 (AKTNQAKVEKSKQARGGESKA) are Cytoplasmic-facing.

Belongs to the TPT transporter family. SLC35D subfamily. As to quaternary structure, homooligomer.

Its subcellular location is the golgi apparatus membrane. The protein resides in the cytoplasmic vesicle membrane. The protein localises to the endoplasmic reticulum membrane. In terms of biological role, involved in the import of GDP-mannose from the cytoplasm into the Golgi lumen. This chain is GDP-mannose transporter 2 (GMT2), found in Cryptococcus neoformans var. neoformans serotype D (strain B-3501A) (Filobasidiella neoformans).